A 371-amino-acid chain; its full sequence is Putative glutamate--cysteine ligase 2 (371 aa).

It belongs to the glutamate--cysteine ligase type 2 family. YbdK subfamily.

It carries out the reaction L-cysteine + L-glutamate + ATP = gamma-L-glutamyl-L-cysteine + ADP + phosphate + H(+). ATP-dependent carboxylate-amine ligase which exhibits weak glutamate--cysteine ligase activity. This is Putative glutamate--cysteine ligase 2 from Cupriavidus taiwanensis (strain DSM 17343 / BCRC 17206 / CCUG 44338 / CIP 107171 / LMG 19424 / R1) (Ralstonia taiwanensis (strain LMG 19424)).